Consider the following 681-residue polypeptide: MIDRDKHQQLRIGLASPEQICAWSKRILPNGRIVGQVTKPYTLHYKTNEPEKDGSFCERIFGPIKSGVCACGNSRVIGNEKENSKFCEQCGVEFVDSRIRRYRMGYIELACPVVHVWYSKRLPSYIANLLAKPLKESEGPVYCDLFIARPIANKPTSLRSRGPFKYEIQSWRDIIPHYFSARGFGAFRHREIATGGDAIREQLAGLNLQILMDRSYMEWKRLGKQKSAGNGWGDRKIQRRKDFSVRRMKLAKHFLQTDIEPEWMVLCPLPVLPPELRPIVQLGGGELITSDPNELYRRVIYRNNTLTDLLARSRSTPGGLVICQKKLVQEAVDALLDNGIRGQPMRDSHDRPYKSFSDVIEGKEGRSRENLLGKRVDYSGRSVIVVGPSLPLHQCGLPREIAIELFQAFVIRGLIRRHFAPNLRAAKSIIRDKEPIVWEVLQGVMQGHPVSLNRAPTLHRLGIQAFQPILVEGRAIRLHPLVCGGFNADSDGDQMAVHVPLSLEAQAEARLLMFSHTNLLSPAIGDPISVPTQDMLLGLYILTVGNNQGIYGNRYHPYYSKYKIFSCKKPSFYSYDDALGAHWQKRIELDSPLWFRWGVGLRIITSVDREAPIEVQYESLGIFHEIYEHYRIGKNEVGEILSIYIRTTVGRIRFDREIEEAIQGFSRASEHPNKSLPAIII.

Residues Cys-69, Cys-71, Cys-87, and Cys-90 each coordinate Zn(2+). Residues Asp-489, Asp-491, and Asp-493 each contribute to the Mg(2+) site.

This sequence belongs to the RNA polymerase beta' chain family. RpoC1 subfamily. In plastids the minimal PEP RNA polymerase catalytic core is composed of four subunits: alpha, beta, beta', and beta''. When a (nuclear-encoded) sigma factor is associated with the core the holoenzyme is formed, which can initiate transcription. Requires Mg(2+) as cofactor. Zn(2+) is required as a cofactor.

It is found in the plastid. Its subcellular location is the chloroplast. The catalysed reaction is RNA(n) + a ribonucleoside 5'-triphosphate = RNA(n+1) + diphosphate. Functionally, DNA-dependent RNA polymerase catalyzes the transcription of DNA into RNA using the four ribonucleoside triphosphates as substrates. This Cycas taitungensis (Prince sago) protein is DNA-directed RNA polymerase subunit beta'.